The sequence spans 746 residues: Histone-lysine N-methyltransferase EZH2 (746 aa).

The interval methionine 1–alanine 340 is interaction with DNMT1, DNMT3A and DNMT3B. Serine 21 carries the post-translational modification Phosphoserine; by PKB/AKT1. The segment at lysine 39–valine 68 is interaction with EED. O-linked (GlcNAc) serine glycosylation occurs at serine 75. Serine 76 carries the post-translational modification Phosphoserine. Positions glutamine 180–lysine 222 are disordered. Over residues asparagine 182–glutamate 195 the composition is skewed to acidic residues. A compositionally biased stretch (basic and acidic residues) spans arginine 196–lysine 222. Residues glutamate 329–proline 522 are interaction with CDYL. A Phosphothreonine modification is found at threonine 339. The tract at residues alanine 340–proline 426 is disordered. Position 345 is a phosphothreonine; by CDK1 and CDK2 (threonine 345). Over residues threonine 345–arginine 357 the composition is skewed to basic residues. A phosphoserine mark is found at serine 363 and serine 366. Threonine 367 bears the Phosphothreonine mark. A compositionally biased stretch (basic and acidic residues) spans glutamate 374–glycine 385. Threonine 487 is modified (phosphothreonine). Residues cysteine 503 to serine 605 enclose the CXC domain. The 116-residue stretch at lysine 612 to arginine 727 folds into the SET domain. Residue lysine 634 forms a Glycyl lysine isopeptide (Lys-Gly) (interchain with G-Cter in SUMO2) linkage.

It belongs to the class V-like SAM-binding methyltransferase superfamily. Histone-lysine methyltransferase family. EZ subfamily. In terms of assembly, component of the PRC2/EED-EZH2 complex, which includes EED, EZH2, SUZ12, RBBP4 and RBBP7 and possibly AEBP2. The minimum components required for methyltransferase activity of the PRC2/EED-EZH2 complex are EED, EZH2 and SUZ12. The PRC2 complex may also interact with DNMT1, DNMT3A, DNMT3B and PHF1 via the EZH2 subunit and with SIRT1 via the SUZ12 subunit. Interacts with HDAC1 and HDAC2. Binds ATRX via the SET domain. Interacts with PRAME. Interacts with CDYL. Interacts with CLOCK, BMAL1 and CRY1. Interacts with DNMT3L; the interaction is direct. Interacts with EZHIP; the interaction blocks EZH2 methyltransferase activity. Interacts with ZNF263; recruited to the SIX3 promoter along with other proteins involved in chromatin modification and transcriptional corepression where it contributes to transcriptional repression. Interacts with ARMC12. Interacts with ZMYND8; the interaction is dependent on the presence of chromatin. Interacts with DDX18; this interaction inhibits the PRC2 complex. Phosphorylated by AKT1. Phosphorylation by AKT1 reduces methyltransferase activity. Phosphorylation at Thr-345 by CDK1 and CDK2 promotes maintenance of H3K27me3 levels at EZH2-target loci, thus leading to epigenetic gene silencing. Post-translationally, sumoylated. In terms of processing, glycosylated: O-GlcNAcylation at Ser-75 by OGT increases stability of EZH2 and facilitates the formation of H3K27me3 by the PRC2/EED-EZH2 complex. In terms of tissue distribution, in the ovary, expressed in primordial follicles and oocytes and also in external follicle cells (at protein level). Expressed in many tissues. Overexpressed in numerous tumor types including carcinomas of the breast, colon, larynx, lymphoma and testis.

The protein resides in the nucleus. The enzyme catalyses L-lysyl(27)-[histone H3] + 3 S-adenosyl-L-methionine = N(6),N(6),N(6)-trimethyl-L-lysyl(27)-[histone H3] + 3 S-adenosyl-L-homocysteine + 3 H(+). In terms of biological role, polycomb group (PcG) protein. Catalytic subunit of the PRC2/EED-EZH2 complex, which methylates 'Lys-9' (H3K9me) and 'Lys-27' (H3K27me) of histone H3, leading to transcriptional repression of the affected target gene. Able to mono-, di- and trimethylate 'Lys-27' of histone H3 to form H3K27me1, H3K27me2 and H3K27me3, respectively. Displays a preference for substrates with less methylation, loses activity when progressively more methyl groups are incorporated into H3K27, H3K27me0 &gt; H3K27me1 &gt; H3K27me2. Compared to EZH1-containing complexes, it is more abundant in embryonic stem cells and plays a major role in forming H3K27me3, which is required for embryonic stem cell identity and proper differentiation. The PRC2/EED-EZH2 complex may also serve as a recruiting platform for DNA methyltransferases, thereby linking two epigenetic repression systems. Genes repressed by the PRC2/EED-EZH2 complex include HOXC8, HOXA9, MYT1, CDKN2A and retinoic acid target genes. EZH2 can also methylate non-histone proteins such as the transcription factor GATA4 and the nuclear receptor RORA. Regulates the circadian clock via histone methylation at the promoter of the circadian genes. Essential for the CRY1/2-mediated repression of the transcriptional activation of PER1/2 by the CLOCK-BMAL1 heterodimer; involved in the di and trimethylation of 'Lys-27' of histone H3 on PER1/2 promoters which is necessary for the CRY1/2 proteins to inhibit transcription. This Homo sapiens (Human) protein is Histone-lysine N-methyltransferase EZH2.